The chain runs to 669 residues: Pre-mRNA-processing factor 39 (669 aa).

The span at 1 to 10 shows a compositional bias: basic and acidic residues; it reads MQNSHMDEYR. Residues 1–23 form a disordered region; the sequence is MQNSHMDEYRNSSNGSTGNSSEV. The segment covering 11–23 has biased composition (low complexity); it reads NSSNGSTGNSSEV. Position 44 is a phosphoserine (Ser44). HAT repeat units lie at residues 109–141, 143–175, 183–218, 220–253, 333–365, 367–399, and 404–436; these read NHLM…LEKR, DNIK…FLKE, ETNN…WENE, GNLR…HVQN, TFEE…FEIE, GTHE…YMEN, and GVRH…QQGN. The segment covering 599 to 624 has biased composition (basic and acidic residues); that stretch reads KEQDSLKRKAENGSEEPEEKKAHTED. Residues 599–634 are disordered; that stretch reads KEQDSLKRKAENGSEEPEEKKAHTEDTTSSSTQMID. Residues 625–634 show a composition bias toward polar residues; sequence TTSSSTQMID.

The protein belongs to the PRP39 family.

It localises to the nucleus. In terms of biological role, involved in pre-mRNA splicing. This Homo sapiens (Human) protein is Pre-mRNA-processing factor 39 (PRPF39).